The primary structure comprises 479 residues: Sulfate adenylyltransferase subunit 1 (479 aa).

The 215-residue stretch at 25 to 239 folds into the tr-type G domain; the sequence is KSLLRFLTCG…EVLETVDIQR (215 aa). Residues 34–41 are G1; the sequence is GSVDDGKS. Position 34–41 (34–41) interacts with GTP; it reads GSVDDGKS. A G2 region spans residues 92–96; it reads GITID. The interval 113 to 116 is G3; it reads DTPG. GTP-binding positions include 113–117 and 168–171; these read DTPGH and NKMD. The G4 stretch occupies residues 168–171; sequence NKMD. The segment at 206 to 208 is G5; sequence SAL.

Belongs to the TRAFAC class translation factor GTPase superfamily. Classic translation factor GTPase family. CysN/NodQ subfamily. Heterodimer composed of CysD, the smaller subunit, and CysN.

The enzyme catalyses sulfate + ATP + H(+) = adenosine 5'-phosphosulfate + diphosphate. It participates in sulfur metabolism; hydrogen sulfide biosynthesis; sulfite from sulfate: step 1/3. With CysD forms the ATP sulfurylase (ATPS) that catalyzes the adenylation of sulfate producing adenosine 5'-phosphosulfate (APS) and diphosphate, the first enzymatic step in sulfur assimilation pathway. APS synthesis involves the formation of a high-energy phosphoric-sulfuric acid anhydride bond driven by GTP hydrolysis by CysN coupled to ATP hydrolysis by CysD. The protein is Sulfate adenylyltransferase subunit 1 of Salmonella newport (strain SL254).